A 328-amino-acid polypeptide reads, in one-letter code: Cell division protein ZipA (328 aa).

Residues 1-6 are Periplasmic-facing; that stretch reads MMQDLR. A helical transmembrane segment spans residues 7-27; sequence LILIVVGAIAIIALLLHGLWT. Residues 28-328 are Cytoplasmic-facing; it reads SRKERSSLFR…REVLDANTIA (301 aa). Residues 61–72 show a composition bias toward basic and acidic residues; it reads GEVRVRTSHPQE. A disordered region spans residues 61–183; that stretch reads GEVRVRTSHP…EPVAPAPEAK (123 aa). Composition is skewed to polar residues over residues 95–104 and 164–174; these read KSAQVKTASR and APQQHVESQQE.

The protein belongs to the ZipA family. In terms of assembly, interacts with FtsZ via their C-terminal domains.

It is found in the cell inner membrane. In terms of biological role, essential cell division protein that stabilizes the FtsZ protofilaments by cross-linking them and that serves as a cytoplasmic membrane anchor for the Z ring. Also required for the recruitment to the septal ring of downstream cell division proteins. In Yersinia pestis bv. Antiqua (strain Antiqua), this protein is Cell division protein ZipA.